We begin with the raw amino-acid sequence, 242 residues long: DNA repair protein RecO (242 aa).

The protein belongs to the RecO family. In terms of assembly, monomer.

Its function is as follows. Involved in DNA repair and RecF pathway recombination. This is DNA repair protein RecO from Shigella boydii serotype 18 (strain CDC 3083-94 / BS512).